The primary structure comprises 226 residues: Pyridoxal 5'-phosphate synthase subunit Pdx2 (226 aa).

52-54 (GES) is a binding site for L-glutamine. C87 acts as the Nucleophile in catalysis. Residues R124 and 156–157 (IR) contribute to the L-glutamine site. Residues H199 and E201 each act as charge relay system in the active site.

This sequence belongs to the glutaminase PdxT/SNO family. As to quaternary structure, in the presence of PdxS, forms a dodecamer of heterodimers. Only shows activity in the heterodimer.

The enzyme catalyses aldehydo-D-ribose 5-phosphate + D-glyceraldehyde 3-phosphate + L-glutamine = pyridoxal 5'-phosphate + L-glutamate + phosphate + 3 H2O + H(+). It catalyses the reaction L-glutamine + H2O = L-glutamate + NH4(+). Its pathway is cofactor biosynthesis; pyridoxal 5'-phosphate biosynthesis. In terms of biological role, catalyzes the hydrolysis of glutamine to glutamate and ammonia as part of the biosynthesis of pyridoxal 5'-phosphate. The resulting ammonia molecule is channeled to the active site of PdxS. The polypeptide is Pyridoxal 5'-phosphate synthase subunit Pdx2 (Plasmodium berghei).